The primary structure comprises 123 residues: Small ribosomal subunit protein uS12 (123 aa).

Asp-89 is subject to 3-methylthioaspartic acid.

The protein belongs to the universal ribosomal protein uS12 family. Part of the 30S ribosomal subunit. Contacts proteins S8 and S17. May interact with IF1 in the 30S initiation complex.

Functionally, with S4 and S5 plays an important role in translational accuracy. In terms of biological role, interacts with and stabilizes bases of the 16S rRNA that are involved in tRNA selection in the A site and with the mRNA backbone. Located at the interface of the 30S and 50S subunits, it traverses the body of the 30S subunit contacting proteins on the other side and probably holding the rRNA structure together. The combined cluster of proteins S8, S12 and S17 appears to hold together the shoulder and platform of the 30S subunit. This Rhodopseudomonas palustris (strain BisA53) protein is Small ribosomal subunit protein uS12.